A 165-amino-acid chain; its full sequence is Nucleotide-binding protein P9211_04811 (165 aa).

Belongs to the YajQ family.

Nucleotide-binding protein. This Prochlorococcus marinus (strain MIT 9211) protein is Nucleotide-binding protein P9211_04811.